Reading from the N-terminus, the 141-residue chain is Large ribosomal subunit protein uL22 (141 aa).

The tract at residues 110-141 (EEKKTVAKKTTTTKAPAKKTTSTKKATVKKES) is disordered. Residues 117–134 (KKTTTTKAPAKKTTSTKK) show a composition bias toward low complexity.

This sequence belongs to the universal ribosomal protein uL22 family. Part of the 50S ribosomal subunit.

This protein binds specifically to 23S rRNA; its binding is stimulated by other ribosomal proteins, e.g. L4, L17, and L20. It is important during the early stages of 50S assembly. It makes multiple contacts with different domains of the 23S rRNA in the assembled 50S subunit and ribosome. Its function is as follows. The globular domain of the protein is located near the polypeptide exit tunnel on the outside of the subunit, while an extended beta-hairpin is found that lines the wall of the exit tunnel in the center of the 70S ribosome. This Campylobacter jejuni (strain RM1221) protein is Large ribosomal subunit protein uL22.